The sequence spans 247 residues: Acidic 27 kDa endochitinase (247 aa).

Positions 1 to 16 (MVLCCVFLLFLTGSFA) are cleaved as a signal peptide. The active-site Proton donor is glutamate 84. Cysteine 206 and cysteine 238 form a disulfide bridge.

It belongs to the glycosyl hydrolase 19 family. Chitinase class II subfamily.

It localises to the secreted. Its subcellular location is the extracellular space. The enzyme catalyses Random endo-hydrolysis of N-acetyl-beta-D-glucosaminide (1-&gt;4)-beta-linkages in chitin and chitodextrins.. Defense against chitin-containing fungal pathogens. The chain is Acidic 27 kDa endochitinase (CHI17) from Solanum lycopersicum (Tomato).